The following is a 289-amino-acid chain: Survival motor neuron protein (289 aa).

A compositionally biased stretch (gly residues) spans 1–10 (MAMGSGGGAG). Positions 1-27 (MAMGSGGGAGSEQEDTVLFRRGTGQSD) are disordered. The interval 11–42 (SEQEDTVLFRRGTGQSDDSDIWDDTALIKAYD) is P1 (binding site for GEMIN2). Thr23 carries the phosphothreonine modification. Phosphoserine is present on residues Ser26 and Ser29. A Glycyl lysine isopeptide (Lys-Gly) (interchain with G-Cter in SUMO2) cross-link involves residue Lys49. A disordered region spans residues 55-88 (GDMCETSDKPKGTARRKPAKKNKNQKKNATAPLK). Residues 66–80 (GTARRKPAKKNKNQK) show a composition bias toward basic residues. The residue at position 67 (Thr67) is a Phosphothreonine. The 61-residue stretch at 89–149 (QWKAGDKCSA…LSPTCEVANN (61 aa)) folds into the Tudor domain. The interval 95–205 (KCSAVWSEDG…VPGAGLGPGK (111 aa)) is required for interaction with RPP20/POP7. The segment at 150–226 (TEQNTQENES…PPPPPPFLPC (77 aa)) is disordered. Over residues 171 to 181 (RSLRSKAHSKS) the composition is skewed to basic residues. Lys205 participates in a covalent cross-link: Glycyl lysine isopeptide (Lys-Gly) (interchain with G-Cter in SUMO2). Positions 212-226 (GPPPPPPPPPPFLPC) are enriched in pro residues. Residues 235-262 (PPIIPPPPPISPDCLDDTDALGSMLISW) form a P2 (binding site for SM B) region. The required for interaction with SYNCRIP stretch occupies residues 274 to 289 (GFRQNKKEGKKCSHTN).

Belongs to the SMN family. In terms of assembly, homooligomer; may form higher order homooligomers in the dimer to octamer range. Part of the core SMN complex that contains SMN1, GEMIN2/SIP1, DDX20/GEMIN3, GEMIN4, GEMIN5, GEMIN6, GEMIN7, GEMIN8 and STRAP/UNRIP. Part of the SMN-Sm complex that contains SMN1, GEMIN2/SIP1, DDX20/GEMIN3, GEMIN4, GEMIN5, GEMIN6, GEMIN7, GEMIN8, STRAP/UNRIP and the Sm proteins SNRPB, SNRPD1, SNRPD2, SNRPD3, SNRPE, SNRPF and SNRPG. Component of an import snRNP complex composed of KPNB1, RNUT1, SMN1 and ZNF259. Interacts with DDX20, FBL, NOLA1, RNUT1 and with several spliceosomal snRNP core Sm proteins, including SNRPB, SNRPD1, SNRPD2, SNRPD3, SNRPE and ILF3. Interacts with GEMIN2; the interaction is direct. Interacts with GEMIN3; the interaction is direct. Interacts with GEMIN8; the interaction is direct. Interacts with SNRPB; the interaction is direct. Interacts (via Tudor domain) with SNRPD1 (via C-terminus); the interaction is direct. Interacts with SNRPD2; the interaction is direct. Interacts (via Tudor domain) with SNRPD3 (via C-terminus); the interaction is direct. Interacts with SNRPE; the interaction is direct. Interacts with OSTF1, LSM10, LSM11 and RPP20/POP7. Interacts (via C-terminal region) with ZPR1 (via C-terminal region). Interacts (via Tudor domain) with COIL. Interacts with SETX; recruits SETX to POLR2A. Interacts with POLR2A (via the C-terminal domain (CTD)). Interacts with PRMT5. Interacts with XRN2. Interacts (via C-terminus) with FMR1 (via C-terminus); the interaction is direct and occurs in a RNA-independent manner. Interacts with SYNCRIP. Interacts (via Tudor domain) with SF3B2 (methylated form). Interacts with WRAP53/TCAB1. Interacts (via Tudor domain) with ELAVL4 in an RNA-independent manner; the interaction is required for localization of ELAVL4 to RNA granules. Interacts with FRG1.

The protein resides in the nucleus. It is found in the gem. The protein localises to the cajal body. It localises to the cytoplasm. Its subcellular location is the cytoplasmic granule. The protein resides in the perikaryon. It is found in the cell projection. The protein localises to the neuron projection. It localises to the axon. Its subcellular location is the myofibril. The protein resides in the sarcomere. It is found in the z line. In terms of biological role, the SMN complex catalyzes the assembly of small nuclear ribonucleoproteins (snRNPs), the building blocks of the spliceosome, and thereby plays an important role in the splicing of cellular pre-mRNAs. Most spliceosomal snRNPs contain a common set of Sm proteins SNRPB, SNRPD1, SNRPD2, SNRPD3, SNRPE, SNRPF and SNRPG that assemble in a heptameric protein ring on the Sm site of the small nuclear RNA to form the core snRNP (Sm core). In the cytosol, the Sm proteins SNRPD1, SNRPD2, SNRPE, SNRPF and SNRPG are trapped in an inactive 6S pICln-Sm complex by the chaperone CLNS1A that controls the assembly of the core snRNP. To assemble core snRNPs, the SMN complex accepts the trapped 5Sm proteins from CLNS1A forming an intermediate. Binding of snRNA inside 5Sm ultimately triggers eviction of the SMN complex, thereby allowing binding of SNRPD3 and SNRPB to complete assembly of the core snRNP. Within the SMN complex, SMN1 acts as a structural backbone and together with GEMIN2 it gathers the Sm complex subunits. Ensures the correct splicing of U12 intron-containing genes that may be important for normal motor and proprioceptive neurons development. Also required for resolving RNA-DNA hybrids created by RNA polymerase II, that form R-loop in transcription terminal regions, an important step in proper transcription termination. May also play a role in the metabolism of small nucleolar ribonucleoprotein (snoRNPs). The protein is Survival motor neuron protein (Smn1) of Rattus norvegicus (Rat).